The sequence spans 445 residues: MKHFEANFDGLVGPTHNYAGLSFGNVASLNNAAATSSPKDAAKQGLKKAKALADLGLVQGMLAPQERPDLHTLRRIGFSGTDAEILNKAAKEAPALLRACCSASSMWTANAATVSPSADTHDGKLHFTPANLVDKLHRSIEPTTTGNILQATFNDSRYFKHHQHLPEHTSFGDEGAANHTRLCSEYGHAGVELFVYGQEATNPSAPKPQKFPARQTLEASQAVARLHQLDDNGTVYIQQNPDVIDQGVFHNDVIAVGNQNVLFYHEQAFLNTQAKLTEIKNKFGDSALHFVEVPTSQVAIQDAVKSYLFNTQVVTLPSGEMAIIAPTNCQENPAVFAYLNELVTLDTPIKQVLYFDVKQSMQNGGGPACLRLRVAMNQDEVAAVNQHTLMNDALFTRLNQWVDKHYRDRLLVEDLADPQLVIESRTALDELTQIMKLGSVYQFQR.

Residues 19–28, Asn-110, and 137–138 contribute to the substrate site; these read AGLSFGNVAS and HR. The active site involves Glu-174. Position 214 (Arg-214) interacts with substrate. His-250 is a catalytic residue. Substrate contacts are provided by Asp-252 and Asn-363. The active-site Nucleophile is the Cys-369.

Belongs to the succinylarginine dihydrolase family. As to quaternary structure, homodimer.

The catalysed reaction is N(2)-succinyl-L-arginine + 2 H2O + 2 H(+) = N(2)-succinyl-L-ornithine + 2 NH4(+) + CO2. It functions in the pathway amino-acid degradation; L-arginine degradation via AST pathway; L-glutamate and succinate from L-arginine: step 2/5. Its function is as follows. Catalyzes the hydrolysis of N(2)-succinylarginine into N(2)-succinylornithine, ammonia and CO(2). This is N-succinylarginine dihydrolase from Shewanella pealeana (strain ATCC 700345 / ANG-SQ1).